The chain runs to 307 residues: Elongation factor Ts (307 aa).

The segment at 80–83 is involved in Mg(2+) ion dislocation from EF-Tu; the sequence is TDFV.

This sequence belongs to the EF-Ts family.

Its subcellular location is the cytoplasm. Associates with the EF-Tu.GDP complex and induces the exchange of GDP to GTP. It remains bound to the aminoacyl-tRNA.EF-Tu.GTP complex up to the GTP hydrolysis stage on the ribosome. This is Elongation factor Ts from Clostridium botulinum (strain Kyoto / Type A2).